The primary structure comprises 295 residues: MSKSSKLCCKTSCPRSNIFCSLVDKVFKRPSLQSLHQWGYHCYEPRVYRTLAKILRYVDLEGFDILLSDYIAFVEKSGCHLEVNFNLEFTEICVNTILYWVFARKGNPDFVELLLKKTKDYVQDRSFNLALIWRTFTPVYCPSPLSGITPLLYVAQTRQSNILKILLQYGILERENNPINIVLTILLYPSRVRIMVDHELVDIEEDAKTCLVLCSRVLSTISIREIEMQLSLGRRPIISNWLDYIPSTRYKDPCELLHLCRITIRAQLLTNNMLPNGIFSLLIPVCLQNYLNLES.

One copy of the ANK repeat lies at 146-176 (SGITPLLYVAQTRQSNILKILLQYGILEREN). The region spanning 232–295 (LGRRPIISNW…CLQNYLNLES (64 aa)) is the SOCS box domain.

Belongs to the ankyrin SOCS box (ASB) family.

Its pathway is protein modification; protein ubiquitination. May be a substrate-recognition component of a SCF-like ECS (Elongin-Cullin-SOCS-box protein) E3 ubiquitin-protein ligase complex which mediates the ubiquitination and subsequent proteasomal degradation of target proteins. This chain is Ankyrin repeat and SOCS box protein 17 (ASB17), found in Bos taurus (Bovine).